A 376-amino-acid polypeptide reads, in one-letter code: tRNA (guanine(26)-N(2))-dimethyltransferase (376 aa).

A Trm1 methyltransferase domain is found at 4–373; that stretch reads VAVKEGLARI…APFGVVAEVM (370 aa). S-adenosyl-L-methionine contacts are provided by R36, R61, D78, D120, and A121.

This sequence belongs to the class I-like SAM-binding methyltransferase superfamily. Trm1 family.

It catalyses the reaction guanosine(26) in tRNA + 2 S-adenosyl-L-methionine = N(2)-dimethylguanosine(26) in tRNA + 2 S-adenosyl-L-homocysteine + 2 H(+). Its function is as follows. Dimethylates a single guanine residue at position 26 of a number of tRNAs using S-adenosyl-L-methionine as donor of the methyl groups. In Thermococcus kodakarensis (strain ATCC BAA-918 / JCM 12380 / KOD1) (Pyrococcus kodakaraensis (strain KOD1)), this protein is tRNA (guanine(26)-N(2))-dimethyltransferase.